An 849-amino-acid polypeptide reads, in one-letter code: Probable receptor-like protein kinase At1g30570 (849 aa).

A signal peptide spans 1–28 (MSKLRKKYLEHLLCVLIFFTYVIGYGEA). Topologically, residues 29-429 (QSKSFLVDCG…GHSVSDSKMR (401 aa)) are extracellular. Residues Asn40, Asn57, Asn94, Asn122, Asn158, Asn268, Asn271, Asn305, and Asn343 are each glycosylated (N-linked (GlcNAc...) asparagine). A helical transmembrane segment spans residues 430–450 (IIWISVGAGIAIIIFFVFLGI). At 451–849 (LVVCLCKKRR…QTGSALHNSA (399 aa)) the chain is on the cytoplasmic side. One can recognise a Protein kinase domain in the interval 520–793 (FDDGLAIGVG…GEVLWSLEYV (274 aa)). Residues 526–534 (IGVGGFGKV) and Lys548 each bind ATP. Asp644 (proton acceptor) is an active-site residue. The interval 810–849 (FSSSQAVEEAPESFTLPACSNQDSSETEQSQTGSALHNSA) is disordered. Positions 827–849 (ACSNQDSSETEQSQTGSALHNSA) are enriched in polar residues.

Belongs to the protein kinase superfamily. Ser/Thr protein kinase family.

The protein resides in the cell membrane. In Arabidopsis thaliana (Mouse-ear cress), this protein is Probable receptor-like protein kinase At1g30570.